A 339-amino-acid polypeptide reads, in one-letter code: Transmembrane protein 120B (339 aa).

A coiled-coil region spans residues 1 to 77 (MSGQLERCER…ASREEAELVQ (77 aa)). 6 helical membrane-spanning segments follow: residues 102-124 (GLYL…AKFA), 132-152 (FKLY…FFLH), 159-179 (VFNF…SILI), 187-207 (GWWV…LTWP), 270-290 (FLLP…VTLF), and 302-322 (QVFV…LTTL).

Belongs to the TMEM120 family. In terms of assembly, heterooligomer with TMEM120A.

The protein localises to the nucleus inner membrane. Necessary for efficient adipogenesis. Does not show ion channel activity. The polypeptide is Transmembrane protein 120B (TMEM120B) (Bos taurus (Bovine)).